A 774-amino-acid chain; its full sequence is 5-methyltetrahydropteroyltriglutamate--homocysteine methyltransferase (774 aa).

5-methyltetrahydropteroyltri-L-glutamate is bound by residues 23-26 and Lys123; that span reads RELK. Residues 446–448 and Glu499 each bind L-homocysteine; that span reads IGS. L-methionine-binding positions include 446–448 and Glu499; that span reads IGS. 5-methyltetrahydropteroyltri-L-glutamate is bound by residues 530 to 531 and Trp576; that span reads RC. Residue Asp614 participates in L-homocysteine binding. Residue Asp614 coordinates L-methionine. Residue Glu620 coordinates 5-methyltetrahydropteroyltri-L-glutamate. Zn(2+)-binding residues include His656, Cys658, and Glu680. His709 acts as the Proton donor in catalysis. A Zn(2+)-binding site is contributed by Cys741.

This sequence belongs to the vitamin-B12 independent methionine synthase family. The cofactor is Zn(2+).

It catalyses the reaction 5-methyltetrahydropteroyltri-L-glutamate + L-homocysteine = tetrahydropteroyltri-L-glutamate + L-methionine. The protein operates within amino-acid biosynthesis; L-methionine biosynthesis via de novo pathway; L-methionine from L-homocysteine (MetE route): step 1/1. Catalyzes the transfer of a methyl group from 5-methyltetrahydrofolate to homocysteine resulting in methionine formation. The chain is 5-methyltetrahydropteroyltriglutamate--homocysteine methyltransferase from Aliivibrio fischeri (strain ATCC 700601 / ES114) (Vibrio fischeri).